We begin with the raw amino-acid sequence, 315 residues long: tRNA dimethylallyltransferase (315 aa).

14–21 (GPTASGKT) lines the ATP pocket. 16-21 (TASGKT) provides a ligand contact to substrate. Interaction with substrate tRNA stretches follow at residues 39 to 42 (DSAL), 163 to 167 (QRIQR), and 248 to 253 (RCVGYR).

Belongs to the IPP transferase family. As to quaternary structure, monomer. Mg(2+) is required as a cofactor.

It carries out the reaction adenosine(37) in tRNA + dimethylallyl diphosphate = N(6)-dimethylallyladenosine(37) in tRNA + diphosphate. Functionally, catalyzes the transfer of a dimethylallyl group onto the adenine at position 37 in tRNAs that read codons beginning with uridine, leading to the formation of N6-(dimethylallyl)adenosine (i(6)A). The protein is tRNA dimethylallyltransferase of Paraburkholderia xenovorans (strain LB400).